The following is a 511-amino-acid chain: Apolipoprotein N-acyltransferase (511 aa).

6 helical membrane-spanning segments follow: residues 24-44, 58-78, 90-110, 125-145, 163-183, and 192-212; these read LALA…LLYL, GWWY…VSIH, FLML…AWLW, LAFA…LTGF, VPVG…ALLV, and GASL…GLYL. One can recognise a CN hydrolase domain in the interval 230–470; that stretch reads IQGNIAQELK…QGILRGEVIP (241 aa). The active-site Proton acceptor is the Glu269. Lys330 is an active-site residue. Cys382 acts as the Nucleophile in catalysis. A helical membrane pass occupies residues 482–502; the sequence is VWPLAGLAGVLLLWALLGRQL.

The protein belongs to the CN hydrolase family. Apolipoprotein N-acyltransferase subfamily.

It is found in the cell inner membrane. It carries out the reaction N-terminal S-1,2-diacyl-sn-glyceryl-L-cysteinyl-[lipoprotein] + a glycerophospholipid = N-acyl-S-1,2-diacyl-sn-glyceryl-L-cysteinyl-[lipoprotein] + a 2-acyl-sn-glycero-3-phospholipid + H(+). It functions in the pathway protein modification; lipoprotein biosynthesis (N-acyl transfer). Its function is as follows. Catalyzes the phospholipid dependent N-acylation of the N-terminal cysteine of apolipoprotein, the last step in lipoprotein maturation. This Pseudomonas aeruginosa (strain UCBPP-PA14) protein is Apolipoprotein N-acyltransferase.